The chain runs to 1433 residues: MRKKTKNRLISSVLSTVVISSLLFPGAAGASSKVTSPSVKKELQSAESIQNKISSSLKKSFKKKEKTTFLIKFKDLANPEKAAKAAVKKAKSKKLSAAKTEYQKRSAVVSSLKVTADESQQDVLKYLNTQKDKGNADQIHSYYVVNGIAVHASKEVMEKVVQFPEVEKVLPNEKRQLFKSSSPFNMKKAQKAIKATDGVEWNVDQIDAPKAWALGYDGTGTVVASIDTGVEWNHPALKEKYRGYNPENPNEPENEMNWYDAVAGEASPYDDLAHGTHVTGTMVGSEPDGTNQIGVAPGAKWIAVKAFSEDGGTDADILEAGEWVLAPKDAEGNPHPEMAPDVVNNSWGGGSGLDEWYRDMVNAWRAADIFPEFSAGNTDLFIPGGPGSIANPANYPESFATGATDINKKLADFSLQGPSPYDEIKPEISAPGVNIRSSVPGQTYEDGWDGTSMAGPHVSAVAALLKQANASLSVDEMEDILTSTAEPLTDSTFPDSPNNGYGHGLVNAFDAVSAVTDGLGKAEGQVSVEGDDQEPPVYQHEKVTEAYEGGSLPLTLTAEDNVSVTSVKLSYKLDQGEWTEITAKRISGDHLKGTYQAEIPDIKGTKLSYKWMIHDFGGHVVSSDVYDVTVKPSITAGYKQDFETAPGGWVASGTNNNWEWGVPSTGPNTAASGEKVYGTNLTGNYANSANMNLVMPPIKAPDSGSLFLQFKSWHNLEDDFDYGYVFVLPEGEKNWEQAGVYNGKTSSWTDEEIDLSAYKGQNIQVMFNLQSDESIAKEGWYIDDVVLSDKSAGKTVKKNKLGVEKPSGKQKKKPVNPKKAKPSANTAVKHQNKAIQPQVLPLKAQVSVVETGKSTYSDQSTGQYTLKHKAGDYTLMAEAYGYQSKTQKVSLKTDQTTQANFTLEEMKKGTLKGTVINKTTGEPVTGASVYVVEDAAVEPAMTNDKGEYMLEAYEGAYTIKVAAPGYYSDEFSVELKGDVTKETALKPFVGYPGEIAYDDGTAENANSYFAAGNGWAVKMTLADGKDKGMLTGGLFRFWDTEFPDPGGTEFKVEVYDATGKDGAPGKKIAGPFNAEALRNGEWTKVDLSSKGIMVDKDFYLVYIQSKPDPYSPGLAMDETGQNSGRNWQYIDGKWQPGDKADGNYMIRALVDYEAAVPEITSPTDKSYTNKDSVTVKGNASPGTTVHIYNGEKEAGETKAAADGTFHAGIILNKGENELTATASTDNGTTDASSPITVTLDQEKPELTLDNPKDGGKTNKETLTVKGAVSDDNLKDVKVNGKKATVADGSYSARILLENGRNEIKVIATDLAGNKTTKKTVIDVNFDKPVISGLIPGEDKNLKAGESVKIAFSSAEDLDATFTIRMPLTNARASVQNATELPLREISPGRYEGYWTATSSIKAKGAKVEVIVRDDYGNETRKTANGKLNMNTEN.

The N-terminal stretch at 1–30 is a signal peptide; it reads MRKKTKNRLISSVLSTVVISSLLFPGAAGA. Positions 31–194 are excised as a propeptide; sequence SSKVTSPSVK…NMKKAQKAIK (164 aa). One can recognise an Inhibitor I9 domain in the interval 68–177; the sequence is TFLIKFKDLA…KVLPNEKRQL (110 aa). A Peptidase S8 domain is found at 200 to 512; the sequence is EWNVDQIDAP…HGLVNAFDAV (313 aa). Residues Asp227, His274, and Ser452 each act as charge relay system in the active site. The propeptide occupies 756-1433; sequence SAYKGQNIQV…NGKLNMNTEN (678 aa). Residues 800–830 form a disordered region; it reads KLGVEKPSGKQKKKPVNPKKAKPSANTAVKH. Residues 808 to 821 show a composition bias toward basic residues; it reads GKQKKKPVNPKKAK.

The protein belongs to the peptidase S8 family.

The protein localises to the secreted. This is Bacillopeptidase F (bpr) from Bacillus subtilis (strain 168).